The chain runs to 206 residues: Small ribosomal subunit protein eS8 (206 aa).

The segment at 1–37 (MGISRDSRHKRSATGAKRAQFRKKRKFELGRQPANTK) is disordered.

The protein belongs to the eukaryotic ribosomal protein eS8 family. Component of the small ribosomal subunit. Mature ribosomes consist of a small (40S) and a large (60S) subunit. The 40S subunit contains about 32 different proteins and 1 molecule of RNA (18S). The 60S subunit contains 45 different proteins and 3 molecules of RNA (25S, 5.8S and 5S).

The protein localises to the cytoplasm. In terms of biological role, component of the ribosome, a large ribonucleoprotein complex responsible for the synthesis of proteins in the cell. The small ribosomal subunit (SSU) binds messenger RNAs (mRNAs) and translates the encoded message by selecting cognate aminoacyl-transfer RNA (tRNA) molecules. The large subunit (LSU) contains the ribosomal catalytic site termed the peptidyl transferase center (PTC), which catalyzes the formation of peptide bonds, thereby polymerizing the amino acids delivered by tRNAs into a polypeptide chain. The nascent polypeptides leave the ribosome through a tunnel in the LSU and interact with protein factors that function in enzymatic processing, targeting, and the membrane insertion of nascent chains at the exit of the ribosomal tunnel. The polypeptide is Small ribosomal subunit protein eS8 (RPS8A) (Candida albicans (strain SC5314 / ATCC MYA-2876) (Yeast)).